Consider the following 239-residue polypeptide: Sensory rhodopsin-2 (239 aa).

Topologically, residues 1 to 3 (MVG) are extracellular. A helical membrane pass occupies residues 4–25 (LTTLFWLGAIGMLVGTLAFAWA). Residues 26-33 (GRDAGSGE) are Cytoplasmic-facing. Residues 34–55 (RRYYVTLVGISGIAAVAYVVMA) traverse the membrane as a helical segment. Residues 56–69 (LGVGWVPVAERTVF) are Extracellular-facing. Residues 70 to 91 (APRYIDWILTTPLIVYFLGLLA) traverse the membrane as a helical segment. The Cytoplasmic segment spans residues 92–94 (GLD). The helical transmembrane segment at 95–117 (SREFGIVITLNTVVMLAGFAGAM) threads the bilayer. The Extracellular portion of the chain corresponds to 118 to 121 (VPGI). The chain crosses the membrane as a helical span at residues 122 to 149 (ERYALFGMGAVAFLGLVYYLVGPMTESA). Residues 150 to 153 (SQRS) lie on the Cytoplasmic side of the membrane. Residues 154-181 (SGIKSLYVRLRNLTVILWAIYPFIWLLG) form a helical membrane-spanning segment. Residues 182 to 189 (PPGVALLT) lie on the Extracellular side of the membrane. A helical transmembrane segment spans residues 190 to 222 (PTVDVALIVYLDLVTKVGFGFIALDAAATLRAE). K205 bears the N6-(retinylidene)lysine mark. Residues 223–239 (HGESLAGVDTDAPAVAD) are Cytoplasmic-facing.

The protein belongs to the archaeal/bacterial/fungal opsin family. As to quaternary structure, homodimer. Interacts with HTR-II.

It localises to the cell membrane. Functionally, photophobic photoreceptor responsible for the negative phototaxis. Activates the sensory rhodopsin II transducer (HTR-II) in response to blue light. The protein is Sensory rhodopsin-2 (sop2) of Natronomonas pharaonis (Natronobacterium pharaonis).